Here is a 349-residue protein sequence, read N- to C-terminus: Probable ethanolamine kinase (349 aa).

The protein belongs to the choline/ethanolamine kinase family.

The protein localises to the cytoplasm. It catalyses the reaction ethanolamine + ATP = phosphoethanolamine + ADP + H(+). The protein operates within phospholipid metabolism; phosphatidylethanolamine biosynthesis; phosphatidylethanolamine from ethanolamine: step 1/3. In terms of biological role, highly specific for ethanolamine phosphorylation. May be a rate-controlling step in phosphatidylethanolamine biosynthesis. In Nematostella vectensis (Starlet sea anemone), this protein is Probable ethanolamine kinase (etnk).